A 755-amino-acid chain; its full sequence is Exocyst complex component 3 (755 aa).

2 coiled-coil regions span residues 34–62 (DQLD…AAIQ) and 618–649 (RAVM…QLRF). Lys38 carries the post-translational modification N6-acetyllysine.

The protein belongs to the SEC6 family. As to quaternary structure, the exocyst complex is composed of EXOC1, EXOC2, EXOC3, EXOC4, EXOC5, EXOC6, EXOC7 and EXOC8. Interacts with EXOC3L1. Interacts with BIRC6/bruce. Interacts with MYRIP. Interacts with SLC6A9. As to expression, widely expressed, with highest levels in kidney, followed by brain (at protein level).

The protein resides in the cytoplasm. It is found in the perinuclear region. The protein localises to the cell projection. Its subcellular location is the growth cone. It localises to the neuron projection. The protein resides in the midbody. It is found in the golgi apparatus. Component of the exocyst complex involved in the docking of exocytic vesicles with fusion sites on the plasma membrane. This is Exocyst complex component 3 (Exoc3) from Rattus norvegicus (Rat).